The primary structure comprises 82 residues: Small ribosomal subunit protein bS16 (82 aa).

It belongs to the bacterial ribosomal protein bS16 family.

The polypeptide is Small ribosomal subunit protein bS16 (Glaesserella parasuis serovar 5 (strain SH0165) (Haemophilus parasuis)).